Here is a 213-residue protein sequence, read N- to C-terminus: uncharacterized protein (213 aa).

This is an uncharacterized protein from Saccharomyces cerevisiae (strain ATCC 204508 / S288c) (Baker's yeast).